The following is a 196-amino-acid chain: Signaling threshold-regulating transmembrane adapter 1 (196 aa).

A signal peptide spans 1 to 24 (MNQADPRLRAVCLWTLTSAAMSRG). Topologically, residues 25–40 (DNCTDLLALGIPSITQ) are extracellular. Asn-26 carries an N-linked (GlcNAc...) asparagine glycan. Residues 41 to 61 (AWGLWVLLGAVTLLFLISLAA) form a helical membrane-spanning segment. Over 62–196 (HLSQWTRGRS…AYANSQPAAS (135 aa)) the chain is Cytoplasmic. A phosphoserine mark is found at Ser-80 and Ser-83. Tyr-90 is subject to Phosphotyrosine. Positions 90-93 (YGNL) are interaction with GRB2. Phosphoserine is present on Ser-102. Tyr-127 is modified (phosphotyrosine). The segment at 132–167 (LRPPQGRIPGPGTPVKYSEVVLDSEPKSQASGPEPE) is disordered. A Phosphothreonine modification is found at Thr-144. The interaction with PTPN11 stretch occupies residues 146–151 (VKYSEV). A phosphotyrosine mark is found at Tyr-148 and Tyr-169. The interval 169–172 (YASV) is interaction with CSK. A Phosphoserine modification is found at Ser-182. Tyr-188 carries the phosphotyrosine modification. Residues 188 to 191 (YANS) are interaction with GRB2.

Homodimer; disulfide-linked. When phosphorylated, interacts with PTPN11/SHP2, GRB2 and CSK. Post-translationally, phosphorylated on tyrosines by LCK, FYN or ZAP70 upon TCR activation; which leads to the recruitment of PTPN11, GRB2 and CSK. In terms of tissue distribution, specifically expressed in T- and B-cells. Present in plasma cells but not in germinal center B-cells (at protein level). Expressed in T- and B-cell lymphoma.

Its subcellular location is the cell membrane. Functionally, negatively regulates TCR (T-cell antigen receptor)-mediated signaling in T-cells. Involved in positive selection of T-cells. This is Signaling threshold-regulating transmembrane adapter 1 (SIT1) from Homo sapiens (Human).